We begin with the raw amino-acid sequence, 463 residues long: Zinc finger protein interacting with ribonucleoprotein K (463 aa).

The KRAB domain occupies 14-89 (VTFQDVAICF…PKTNLCEKCV (76 aa)). Disordered regions lie at residues 106 to 128 (HSTE…KPLE) and 171 to 211 (KYRK…TSNG). Residues 174 to 191 (KSTEGRKETSHESDKSEE) show a composition bias toward basic and acidic residues. Residues 192 to 201 (CQSLSSQKQT) are compositionally biased toward polar residues. 9 C2H2-type zinc fingers span residues 215 to 237 (YECS…QRVH), 243 to 265 (WECR…RRIH), 271 to 293 (YECS…QKTH), 299 to 321 (YECS…KRVH), 327 to 349 (YKCS…RRIH), 355 to 377 (YECR…QRVH), 383 to 405 (YKCS…RRIH), 411 to 433 (YECS…QVVH), and 439 to 461 (YECD…QKCH).

It belongs to the krueppel C2H2-type zinc-finger protein family. As to quaternary structure, interacts with HNRPK. As to expression, expressed in ovary and liver, and at lower levels in brain and muscle.

The protein localises to the nucleus. In terms of biological role, may be a transcriptional repressor. The chain is Zinc finger protein interacting with ribonucleoprotein K (Zik1) from Mus musculus (Mouse).